The following is a 27-amino-acid chain: RDSXVTIVPLRNMRDIVYVGXITIGTP.

This sequence belongs to the peptidase A1 family. In terms of processing, glycosylated. In terms of tissue distribution, placenta.

This chain is Pregnancy-associated glycoprotein 62 (PAG62), found in Capra hircus (Goat).